A 270-amino-acid polypeptide reads, in one-letter code: Phosphatidylglycerol--prolipoprotein diacylglyceryl transferase (270 aa).

The next 7 membrane-spanning stretches (helical) occupy residues 14-34 (VIFE…LLGF), 60-80 (LLFN…VLFY), 95-115 (VWEG…AMLI), 128-148 (ADFV…GNFI), 176-196 (SQLY…NWYI), 202-222 (IGAT…IVEF), and 238-258 (ISMG…IMLV). Arg-143 is a binding site for a 1,2-diacyl-sn-glycero-3-phospho-(1'-sn-glycerol).

It belongs to the Lgt family.

It is found in the cell inner membrane. The enzyme catalyses L-cysteinyl-[prolipoprotein] + a 1,2-diacyl-sn-glycero-3-phospho-(1'-sn-glycerol) = an S-1,2-diacyl-sn-glyceryl-L-cysteinyl-[prolipoprotein] + sn-glycerol 1-phosphate + H(+). Its pathway is protein modification; lipoprotein biosynthesis (diacylglyceryl transfer). Catalyzes the transfer of the diacylglyceryl group from phosphatidylglycerol to the sulfhydryl group of the N-terminal cysteine of a prolipoprotein, the first step in the formation of mature lipoproteins. In Pasteurella multocida (strain Pm70), this protein is Phosphatidylglycerol--prolipoprotein diacylglyceryl transferase.